Consider the following 136-residue polypeptide: Transcription antitermination protein NusB (136 aa).

This sequence belongs to the NusB family.

Functionally, involved in transcription antitermination. Required for transcription of ribosomal RNA (rRNA) genes. Binds specifically to the boxA antiterminator sequence of the ribosomal RNA (rrn) operons. In Paenarthrobacter aurescens (strain TC1), this protein is Transcription antitermination protein NusB.